A 144-amino-acid polypeptide reads, in one-letter code: Large ribosomal subunit protein uL16 (144 aa).

Belongs to the universal ribosomal protein uL16 family. Part of the 50S ribosomal subunit.

Functionally, binds 23S rRNA and is also seen to make contacts with the A and possibly P site tRNAs. This chain is Large ribosomal subunit protein uL16, found in Bacillus subtilis (strain 168).